The chain runs to 625 residues: Acetolactate synthase (625 aa).

The interval 1-29 (MSAPTKPHARPQGAGNSVPNTVKPATQFP) is disordered. Over residues 14–29 (AGNSVPNTVKPATQFP) the composition is skewed to polar residues. E92 lines the thiamine diphosphate pocket. FAD contacts are provided by residues R194, 300–321 (HGTV…LGTR), and 343–362 (DIDP…IVGD). Positions 436–516 (QHQMWAAQFI…IKVALINNGN (81 aa)) are thiamine pyrophosphate binding. Positions 487 and 514 each coordinate Mg(2+).

The protein belongs to the TPP enzyme family. Mg(2+) is required as a cofactor. The cofactor is thiamine diphosphate.

It catalyses the reaction 2 pyruvate + H(+) = (2S)-2-acetolactate + CO2. Its pathway is amino-acid biosynthesis; L-isoleucine biosynthesis; L-isoleucine from 2-oxobutanoate: step 1/4. It functions in the pathway amino-acid biosynthesis; L-valine biosynthesis; L-valine from pyruvate: step 1/4. The polypeptide is Acetolactate synthase (ilvB) (Mycobacterium leprae (strain TN)).